The sequence spans 296 residues: Probable cell wall protein PGA41 (296 aa).

The first 18 residues, 1–18 (MKFTIVLFTLISVTVAAA), serve as a signal peptide directing secretion. Low complexity predominate over residues 146–212 (IASSTKESSS…ITTISSDSST (67 aa)). The disordered stretch occupies residues 146–276 (IASSTKESSS…PNSSQTAPGA (131 aa)). Residues 220 to 245 (QGGGGNSGNNGSNGDGGNDASGGGGV) show a composition bias toward gly residues. Residues Asn229 and Asn268 are each glycosylated (N-linked (GlcNAc...) asparagine). Over residues 247-274 (NENEQASSPPSSQSSTNSNQPNSSQTAP) the composition is skewed to low complexity. The GPI-anchor amidated glycine moiety is linked to residue Gly275. Residues 276-296 (AANYLSSVSVGTLMILVLGLI) constitute a propeptide, removed in mature form.

The protein belongs to the IHD1 family. Post-translationally, the GPI-anchor is attached to the protein in the endoplasmic reticulum and serves to target the protein to the cell surface. There, the glucosamine-inositol phospholipid moiety is cleaved off and the GPI-modified mannoprotein is covalently attached via its lipidless GPI glycan remnant to the 1,6-beta-glucan of the outer cell wall layer.

The protein resides in the secreted. Its subcellular location is the cell wall. It is found in the membrane. Its function is as follows. Probable GPI-anchored cell wall protein that may be involved in cell wall organization, hyphal growth, as well as in virulence. This chain is Probable cell wall protein PGA41 (PGA41), found in Candida albicans (strain SC5314 / ATCC MYA-2876) (Yeast).